The chain runs to 1196 residues: MYLKSLTLKGFKSFASPTTLRFEPGITAVVGPNGSGKSNVVDALAWVMGEQGAKTLRGGKMEDVIFAGTSSRAPLGRAEVTVTIDNSDNALPIEYSEVSITRRMFRDGASEYEINGSSCRLMDVQELLSDSGIGREMHVIVGQGKLDEILQSRPEDRRAFIEEAAGVLKHRKRKEKALRKLDAMSANLARLTDLTTELRRQLKPLGRQAEVARRAQTIQADLRDARLRLAADDLVNRRGEREAIFEAEAAMRREHDEASARLAVASDELAAHEKALGELSGRAESVQQTWFALSALAERVAATVRIASERAQHLDLEPVTTGDTDPDALEAEAERVAAAEQQLLAELATARSRLETARAELAEREREAAEADRAHMAAVRAEADRREGLARLAGQVETMRARVESIDDSVARLSERIEAAAARAQQAKAEFETVQGRVGELDQGEVGLDEHHERTVAALRLADERVAELQAAERDAERKVASLRARIDALAVGLERKDGTAWLTENHSGAGILGPMAKLVKVRSGYEAAVAAVLGSAADALAADGLGAARSALGALKQADGGRAALVLGDWPADPPAPQPAPAGALWALDLIDAPERLRGAITAMLSGVAVVDDLDRALALVAEHPRLRAVTLDGDLVGAGWVSGGSDRKLSTLEVTSEIDKAGAELAAAEAQVAQLSAALSGALAEQAARQDSAEQALAALNESDSAISGMYEQLGRLGQEARTSEDEWSRLLRQREELEAGRTQTVAEVTELENRLRNAQETPQEPAAEPVNRQQIAAATDAARSAEVEARLAVRTAEERANAVRGRADSLRRAAAAEREARVRAQQAREARLRAAAVAAAVADSGRLLATRLNAVVAAASRIRDALAAERQQRATAMAAVRDEVNALSARVAALTDSLHSDEVANAQAALRIEQLEQMVLEQFGMAPADLIAEYGPHIALPPSELEMAEYEQAKERGEQVFAPAPIPFDRPTQERRAKRAERELAELGRVNPLALEEFAALEERYNFLSTQLEDVKAARKDLLGVVDEVDARILQVFSEAYTDVEREFSDVFGVLFPGGEGRLRLTDPSNMLTTGIEVEARPPGKKITRLSLLSGGEKALTAVAMLVAIFRARPSPFYIMDEVEAALDDTNLRRLISLFELLRARSQLIIITHQKPTMEVADALYGVTMQGDGITAVISQRMRGQQVDQLVTT.

32 to 39 provides a ligand contact to ATP; it reads PNGSGKSN. Coiled coils occupy residues 168-288 and 327-497; these read LKHR…SVQQ and DALE…LERK. Positions 510 to 621 constitute an SMC hinge domain; sequence AGILGPMAKL…VDDLDRALAL (112 aa). 2 coiled-coil regions span residues 654-829 and 972-1026; these read LEVT…RAQQ and DRPT…KDLL.

It belongs to the SMC family. In terms of assembly, homodimer.

It localises to the cytoplasm. Its function is as follows. Required for chromosome condensation and partitioning. The polypeptide is Chromosome partition protein Smc (Mycolicibacterium paratuberculosis (strain ATCC BAA-968 / K-10) (Mycobacterium paratuberculosis)).